Reading from the N-terminus, the 282-residue chain is S-formylglutathione hydrolase (282 aa).

A2 is modified (N-acetylalanine). N6-succinyllysine is present on K4. S149 (charge relay system) is an active-site residue. K200 bears the N6-acetyllysine mark. Active-site charge relay system residues include D226 and H260.

Belongs to the esterase D family. As to quaternary structure, homodimer.

The protein localises to the cytoplasm. Its subcellular location is the cytoplasmic vesicle. The catalysed reaction is S-formylglutathione + H2O = formate + glutathione + H(+). Functionally, serine hydrolase involved in the detoxification of formaldehyde. The chain is S-formylglutathione hydrolase (Esd) from Mus musculus (Mouse).